The sequence spans 344 residues: Methionine import ATP-binding protein MetN (344 aa).

Positions 2 to 241 constitute an ABC transporter domain; it reads IEINRVNKIF…PKTALAQEFI (240 aa). Residue 38 to 45 coordinates ATP; it reads GSSGAGKS.

It belongs to the ABC transporter superfamily. Methionine importer (TC 3.A.1.24) family. As to quaternary structure, the complex is composed of two ATP-binding proteins (MetN), two transmembrane proteins (MetI) and a solute-binding protein (MetQ).

It is found in the cell inner membrane. It carries out the reaction L-methionine(out) + ATP + H2O = L-methionine(in) + ADP + phosphate + H(+). The enzyme catalyses D-methionine(out) + ATP + H2O = D-methionine(in) + ADP + phosphate + H(+). Functionally, part of the ABC transporter complex MetNIQ involved in methionine import. Responsible for energy coupling to the transport system. In Aliivibrio fischeri (strain ATCC 700601 / ES114) (Vibrio fischeri), this protein is Methionine import ATP-binding protein MetN.